A 555-amino-acid polypeptide reads, in one-letter code: MIWVAVVITMLLFILVAKPTGIYLEKAFQGSKKLDKVFGPFEKLIFKITGVKEYNQTWKQYALSLVLLNGFMIVVVYFIFRLQGVLPLNPAHIEGMEPTLAFNTAISFMTDTNLQHYSGENGLSYLSQLIGITFLMFAAPATTLALVMAFIRGLAGKELGNFFVDFTRALTRVFLPIAFVTALVFVALGVPQTLDGAVTAQTIDGVKQSIVRGPVASFVSIKELGNNGGGFFGTNSTHPFENPGQMSNILQMMLMMLLPTALPFTYGRMVGNKKQGRILFVSLFMVFLLGFITITTSELNGNPALNAMGIEHVQGSTEGKEVRFGTVFSSLYATVTTAAETGAVNTMHDTLTPIGGLVPLVNMMLNTVYGGVGAGFVNIIMYAIIAVFISGLMVGRTPEFLGKKIEGKEMKLIAVTILFHPLLILGFSALALSTSLGTDAISNLGFHGLTQVVYEYTSSAVNNGSGFEGLGDATTFWNITTGLVMFLGRYFSLVTMLAVAASLKEKTVVPETVGTFRTDNGLFGGIFIGTIVIVGALTFFPMLVLGPIAEFLTLK.

10 helical membrane passes run 2–22, 60–80, 130–150, 173–193, 246–266, 278–298, 374–394, 412–432, 483–503, and 525–545; these read IWVA…PTGI, QYAL…YFIF, IGIT…VMAF, VFLP…VPQT, MSNI…PFTY, ILFV…TTSE, AGFV…GLMV, LIAV…ALAL, LVMF…AASL, and GIFI…MLVL.

The protein belongs to the KdpA family. In terms of assembly, the system is composed of three essential subunits: KdpA, KdpB and KdpC.

The protein localises to the cell membrane. Its function is as follows. Part of the high-affinity ATP-driven potassium transport (or Kdp) system, which catalyzes the hydrolysis of ATP coupled with the electrogenic transport of potassium into the cytoplasm. This subunit binds the extracellular potassium ions and delivers the ions to the membrane domain of KdpB through an intramembrane tunnel. The protein is Potassium-transporting ATPase potassium-binding subunit of Bacillus cereus (strain AH820).